The chain runs to 177 residues: ATP-dependent protease subunit HslV (177 aa).

The active site involves Thr5. Residues Gly161, Cys164, and Thr167 each coordinate Na(+).

Belongs to the peptidase T1B family. HslV subfamily. A double ring-shaped homohexamer of HslV is capped on each side by a ring-shaped HslU homohexamer. The assembly of the HslU/HslV complex is dependent on binding of ATP.

Its subcellular location is the cytoplasm. It catalyses the reaction ATP-dependent cleavage of peptide bonds with broad specificity.. Allosterically activated by HslU binding. Protease subunit of a proteasome-like degradation complex believed to be a general protein degrading machinery. This Campylobacter concisus (strain 13826) protein is ATP-dependent protease subunit HslV.